The chain runs to 431 residues: Ribosome assembly protein SQT1 (431 aa).

WD repeat units follow at residues 63–102 (KHTD…PKFA), 107–146 (GYGE…AQWK), 149–192 (SQMQ…GSLE), 199–243 (VHQQ…QLFK), 309–348 (ELDA…VRHK), and 350–387 (VLED…EKFV).

As to quaternary structure, interacts strongly with QSR1. Part of an oligomeric protein complex that is loosely associated with ribosomes.

In terms of biological role, may be involved in the late step of 60S ribosomal subunit assembly or modification in the cytoplasm. The protein is Ribosome assembly protein SQT1 (SQT1) of Saccharomyces cerevisiae (strain ATCC 204508 / S288c) (Baker's yeast).